The following is a 359-amino-acid chain: Cytoplasmic tRNA 2-thiolation protein 1 (359 aa).

The protein belongs to the TtcA family. CTU1/NCS6/ATPBD3 subfamily. In terms of assembly, interacts with NCS2 and URM1. May act by forming a heterodimer with NCS2. Component of a large molecular weight complex of more than 250 kDa.

The protein resides in the cytoplasm. It localises to the mitochondrion. It participates in tRNA modification; 5-methoxycarbonylmethyl-2-thiouridine-tRNA biosynthesis. Plays a central role in 2-thiolation of mcm(5)S(2)U at tRNA wobble positions of tRNA(Lys), tRNA(Glu) and tRNA(Gln). Directly binds tRNAs and probably acts by catalyzing adenylation of tRNAs, an intermediate required for 2-thiolation. It is unclear whether it acts as a sulfurtransferase that transfers sulfur from thiocarboxylated URM1 onto the uridine of tRNAs at wobble position. Prior mcm(5) tRNA modification by the elongator complex is required for 2-thiolation. May also be involved in protein urmylation. The chain is Cytoplasmic tRNA 2-thiolation protein 1 from Saccharomyces cerevisiae (strain RM11-1a) (Baker's yeast).